The sequence spans 272 residues: Dermonecrotic toxin LvSicTox-alphaIC1aiii (272 aa).

His4 is an active-site residue. The Mg(2+) site is built by Glu24 and Asp26. Residue His40 is the Nucleophile of the active site. Disulfide bonds link Cys44/Cys50 and Cys46/Cys189. Asp84 provides a ligand contact to Mg(2+).

The protein belongs to the arthropod phospholipase D family. Class II subfamily. It depends on Mg(2+) as a cofactor. As to expression, expressed by the venom gland.

The protein localises to the secreted. It carries out the reaction an N-(acyl)-sphingosylphosphocholine = an N-(acyl)-sphingosyl-1,3-cyclic phosphate + choline. It catalyses the reaction an N-(acyl)-sphingosylphosphoethanolamine = an N-(acyl)-sphingosyl-1,3-cyclic phosphate + ethanolamine. The catalysed reaction is a 1-acyl-sn-glycero-3-phosphocholine = a 1-acyl-sn-glycero-2,3-cyclic phosphate + choline. The enzyme catalyses a 1-acyl-sn-glycero-3-phosphoethanolamine = a 1-acyl-sn-glycero-2,3-cyclic phosphate + ethanolamine. In terms of biological role, dermonecrotic toxins cleave the phosphodiester linkage between the phosphate and headgroup of certain phospholipids (sphingolipid and lysolipid substrates), forming an alcohol (often choline) and a cyclic phosphate. This toxin acts on sphingomyelin (SM). It may also act on ceramide phosphoethanolamine (CPE), lysophosphatidylcholine (LPC) and lysophosphatidylethanolamine (LPE), but not on lysophosphatidylserine (LPS), and lysophosphatidylglycerol (LPG). It acts by transphosphatidylation, releasing exclusively cyclic phosphate products as second products. Induces dermonecrosis, hemolysis, increased vascular permeability, edema, inflammatory response, and platelet aggregation. The sequence is that of Dermonecrotic toxin LvSicTox-alphaIC1aiii from Loxosceles variegata (Recluse spider).